Consider the following 993-residue polypeptide: ATP-dependent DNA helicase MPH1 (993 aa).

The Helicase ATP-binding domain maps to Ile-94 to Lys-261. Ile-107 to Thr-114 contacts ATP. A DEAH box motif is present at residues Asp-209 to His-212. Residues Lys-507–Ile-655 form the Helicase C-terminal domain. Positions Asn-530–Met-551 are disordered. A compositionally biased stretch (polar residues) spans Arg-539–Met-551.

It belongs to the DEAD box helicase family. DEAH subfamily. FANCM sub-subfamily. In terms of assembly, interacts with the MHF histone-fold complex to form the FANCM-MHF complex.

The protein localises to the nucleus. The catalysed reaction is ATP + H2O = ADP + phosphate + H(+). In terms of biological role, ATP-dependent DNA helicase involved in DNA damage repair by homologous recombination and in genome maintenance. Capable of unwinding D-loops. Plays a role in limiting crossover recombinants during mitotic DNA double-strand break (DSB) repair. Component of a FANCM-MHF complex which promotes gene conversion at blocked replication forks, probably by reversal of the stalled fork. In Saccharomyces cerevisiae (strain YJM789) (Baker's yeast), this protein is ATP-dependent DNA helicase MPH1.